A 106-amino-acid polypeptide reads, in one-letter code: uncharacterized protein (106 aa).

A helical membrane pass occupies residues 78-98; that stretch reads LAITGYVVSIPIVLPILIIFI.

It localises to the membrane. This is an uncharacterized protein from Haemophilus influenzae (strain ATCC 51907 / DSM 11121 / KW20 / Rd).